The following is a 257-amino-acid chain: UPF0246 protein Mmc1_3117 (257 aa).

It belongs to the UPF0246 family.

In Magnetococcus marinus (strain ATCC BAA-1437 / JCM 17883 / MC-1), this protein is UPF0246 protein Mmc1_3117.